The sequence spans 184 residues: GTP cyclohydrolase 1 (184 aa).

Zn(2+)-binding residues include Cys-75, His-78, and Cys-146.

It belongs to the GTP cyclohydrolase I family. Homomer.

It carries out the reaction GTP + H2O = 7,8-dihydroneopterin 3'-triphosphate + formate + H(+). It functions in the pathway cofactor biosynthesis; 7,8-dihydroneopterin triphosphate biosynthesis; 7,8-dihydroneopterin triphosphate from GTP: step 1/1. The sequence is that of GTP cyclohydrolase 1 from Coxiella burnetii (strain Dugway 5J108-111).